The chain runs to 450 residues: Tubulin beta-6 chain (450 aa).

The GTP site is built by Gln-11, Glu-71, Ser-140, Gly-144, Thr-145, Gly-146, Asn-206, and Asn-228. Glu-71 is a binding site for Mg(2+). A disordered region spans residues 429 to 450 (DATVEDEEEYEGEEGLDENYET). Acidic residues predominate over residues 431-450 (TVEDEEEYEGEEGLDENYET).

The protein belongs to the tubulin family. As to quaternary structure, dimer of alpha and beta chains. A typical microtubule is a hollow water-filled tube with an outer diameter of 25 nm and an inner diameter of 15 nM. Alpha-beta heterodimers associate head-to-tail to form protofilaments running lengthwise along the microtubule wall with the beta-tubulin subunit facing the microtubule plus end conferring a structural polarity. Microtubules usually have 13 protofilaments but different protofilament numbers can be found in some organisms and specialized cells. It depends on Mg(2+) as a cofactor.

The protein localises to the cytoplasm. It localises to the cytoskeleton. Its function is as follows. Tubulin is the major constituent of microtubules, a cylinder consisting of laterally associated linear protofilaments composed of alpha- and beta-tubulin heterodimers. Microtubules grow by the addition of GTP-tubulin dimers to the microtubule end, where a stabilizing cap forms. Below the cap, tubulin dimers are in GDP-bound state, owing to GTPase activity of alpha-tubulin. In Gossypium hirsutum (Upland cotton), this protein is Tubulin beta-6 chain.